The chain runs to 163 residues: Lipoprotein signal peptidase (163 aa).

3 consecutive transmembrane segments (helical) span residues 11–31, 64–84, and 88–108; these read ILIA…IATT, MTFF…FFIN, and YNLF…GNFI. Residues Asp-118 and Asp-136 contribute to the active site. The chain crosses the membrane as a helical span at residues 131–151; the sequence is IFNIADSSLTIGVILIIIALL.

This sequence belongs to the peptidase A8 family.

Its subcellular location is the cell membrane. The catalysed reaction is Release of signal peptides from bacterial membrane prolipoproteins. Hydrolyzes -Xaa-Yaa-Zaa-|-(S,diacylglyceryl)Cys-, in which Xaa is hydrophobic (preferably Leu), and Yaa (Ala or Ser) and Zaa (Gly or Ala) have small, neutral side chains.. It functions in the pathway protein modification; lipoprotein biosynthesis (signal peptide cleavage). Its function is as follows. This protein specifically catalyzes the removal of signal peptides from prolipoproteins. The chain is Lipoprotein signal peptidase from Staphylococcus aureus (strain bovine RF122 / ET3-1).